The sequence spans 575 residues: Arginine--tRNA ligase (575 aa).

The short motif at 131-141 is the 'HIGH' region element; that stretch reads ANPTGPLHVGH.

This sequence belongs to the class-I aminoacyl-tRNA synthetase family. Monomer.

It is found in the cytoplasm. The catalysed reaction is tRNA(Arg) + L-arginine + ATP = L-arginyl-tRNA(Arg) + AMP + diphosphate. The sequence is that of Arginine--tRNA ligase from Jannaschia sp. (strain CCS1).